A 160-amino-acid chain; its full sequence is Heme transporter hrg-5 (160 aa).

A helical membrane pass occupies residues 21–41 (IALTILDILIGFSNILSYAIQ). Residue asparagine 44 is glycosylated (N-linked (GlcNAc...) asparagine). 3 helical membrane passes run 47 to 67 (ALTL…MFLA), 89 to 109 (ITLG…AGVT), and 123 to 142 (FTGL…ALLA). The N-linked (GlcNAc...) asparagine glycan is linked to asparagine 144.

It belongs to the HRG family.

Its subcellular location is the membrane. In terms of biological role, heme transporter. This is Heme transporter hrg-5 (hrg-5) from Caenorhabditis elegans.